We begin with the raw amino-acid sequence, 498 residues long: Lysine--tRNA ligase (498 aa).

Positions 409 and 416 each coordinate Mg(2+).

The protein belongs to the class-II aminoacyl-tRNA synthetase family. Homodimer. It depends on Mg(2+) as a cofactor.

It is found in the cytoplasm. It carries out the reaction tRNA(Lys) + L-lysine + ATP = L-lysyl-tRNA(Lys) + AMP + diphosphate. This is Lysine--tRNA ligase from Teredinibacter turnerae (strain ATCC 39867 / T7901).